A 188-amino-acid chain; its full sequence is A-type ATP synthase subunit E (188 aa).

Belongs to the V-ATPase E subunit family. As to quaternary structure, has multiple subunits with at least A(3), B(3), C, D, E, F, H, I and proteolipid K(x).

It localises to the cell membrane. In terms of biological role, component of the A-type ATP synthase that produces ATP from ADP in the presence of a proton gradient across the membrane. The sequence is that of A-type ATP synthase subunit E from Archaeoglobus fulgidus (strain ATCC 49558 / DSM 4304 / JCM 9628 / NBRC 100126 / VC-16).